The sequence spans 299 residues: Tetrahydromethanopterin S-methyltransferase subunit E (299 aa).

6 consecutive transmembrane segments (helical) span residues 57–79 (AISG…AWAL), 89–111 (AIIV…AFLG), 132–154 (HIGP…AYLA), 164–183 (LPLV…SSTG), 227–246 (FCSR…IIFL), and 261–283 (LVTK…AVIN).

This sequence belongs to the MtrE family. The complex is composed of 8 subunits; MtrA, MtrB, MtrC, MtrD, MtrE, MtrF, MtrG and MtrH.

It localises to the cell membrane. It catalyses the reaction 5-methyl-5,6,7,8-tetrahydromethanopterin + coenzyme M + 2 Na(+)(in) = 5,6,7,8-tetrahydromethanopterin + methyl-coenzyme M + 2 Na(+)(out). It functions in the pathway one-carbon metabolism; methanogenesis from CO(2); methyl-coenzyme M from 5,10-methylene-5,6,7,8-tetrahydromethanopterin: step 2/2. Part of a complex that catalyzes the formation of methyl-coenzyme M and tetrahydromethanopterin from coenzyme M and methyl-tetrahydromethanopterin. This is an energy-conserving, sodium-ion translocating step. The chain is Tetrahydromethanopterin S-methyltransferase subunit E from Methanococcus maripaludis (strain DSM 14266 / JCM 13030 / NBRC 101832 / S2 / LL).